We begin with the raw amino-acid sequence, 226 residues long: Late protein I226R (226 aa).

The signal sequence occupies residues 1-16 (MKMETFLVCLFHNADG). N-linked (GlcNAc...) asparagine; by host glycosylation is found at asparagine 142 and asparagine 164.

The protein belongs to the asfivirus I226R family.

Its function is as follows. Plays a role in the inhibition of host NF-kappa-B and IRF3 signaling pathways. Mechanistically, promotes the degradation of host IKBKG through enhancing its ubiquitination leading to inhibition of both pathways. The polypeptide is Late protein I226R (African swine fever virus (isolate Tick/South Africa/Pretoriuskop Pr4/1996) (ASFV)).